The sequence spans 85 residues: RDS3 complex subunit 10 (85 aa).

In terms of assembly, belongs to the SF3b complex composed of CUS1, HSH49, HSH155, RCP1, RDS3 and RSE1.

It is found in the nucleus. Involved in pre-mRNA splicing. Required for the SF3b integrity and prespliceosome assembly. The chain is RDS3 complex subunit 10 (YSF3) from Saccharomyces cerevisiae (strain ATCC 204508 / S288c) (Baker's yeast).